A 362-amino-acid polypeptide reads, in one-letter code: Protein-arginine kinase (362 aa).

Residues 24 to 255 (IVLSSRIRLA…QQLIAQERMA (232 aa)) enclose the Phosphagen kinase C-terminal domain. ATP contacts are provided by residues 27 to 31 (SSRIR), H92, R126, 177 to 181 (RASVM), and 208 to 213 (RGTYGE). The short motif at 338–343 (RDVRRA) is the RDXXRA motif of the pArg binding pocket involved in allosteric regulation element.

It belongs to the ATP:guanido phosphotransferase family.

The enzyme catalyses L-arginyl-[protein] + ATP = N(omega)-phospho-L-arginyl-[protein] + ADP + H(+). Its activity is regulated as follows. Appears to be allosterically activated by the binding of pArg-containing polypeptides to the pArg-binding pocket localized in the C-terminal domain of McsB. Catalyzes the specific phosphorylation of arginine residues in a large number of proteins. Is part of the bacterial stress response system. Protein arginine phosphorylation has a physiologically important role and is involved in the regulation of many critical cellular processes, such as protein homeostasis, motility, competence, and stringent and stress responses, by regulating gene expression and protein activity. The protein is Protein-arginine kinase of Geobacillus sp. (strain WCH70).